We begin with the raw amino-acid sequence, 545 residues long: Carboxypeptidase Y homolog A (545 aa).

The first 17 residues, 1–17 (MKSLALALLVGGAIAAG), serve as a signal peptide directing secretion. A propeptide spanning residues 18-123 (PQQQVLQAPV…KLEAYDLRVK (106 aa)) is cleaved from the precursor. 5 cysteine pairs are disulfide-bonded: C177-C416, C311-C325, C335-C358, C342-C351, and C380-C386. The N-linked (GlcNAc...) asparagine glycan is linked to N208. S264 is an active-site residue. The active site involves D455. N-linked (GlcNAc...) asparagine glycosylation is found at N485, N491, and N506. H517 is a catalytic residue.

The protein belongs to the peptidase S10 family.

It is found in the vacuole. The enzyme catalyses Release of a C-terminal amino acid with broad specificity.. Its function is as follows. Vacuolar carboxypeptidase involved in degradation of small peptides. Digests preferentially peptides containing an aliphatic or hydrophobic residue in P1' position, as well as methionine, leucine or phenylalanine in P1 position of ester substrate. The polypeptide is Carboxypeptidase Y homolog A (CPYA) (Blastomyces gilchristii (strain SLH14081) (Blastomyces dermatitidis)).